Consider the following 427-residue polypeptide: 3-phosphoshikimate 1-carboxyvinyltransferase (427 aa).

3-phosphoshikimate-binding residues include Lys-20, Ser-21, and Arg-25. Lys-20 contributes to the phosphoenolpyruvate binding site. Residues Gly-92 and Arg-120 each contribute to the phosphoenolpyruvate site. 3-phosphoshikimate-binding residues include Ser-166, Gln-168, Asp-312, and Lys-339. Phosphoenolpyruvate is bound at residue Gln-168. Residue Asp-312 is the Proton acceptor of the active site. Residues Arg-343 and Arg-385 each contribute to the phosphoenolpyruvate site.

This sequence belongs to the EPSP synthase family. As to quaternary structure, monomer.

Its subcellular location is the cytoplasm. It carries out the reaction 3-phosphoshikimate + phosphoenolpyruvate = 5-O-(1-carboxyvinyl)-3-phosphoshikimate + phosphate. It functions in the pathway metabolic intermediate biosynthesis; chorismate biosynthesis; chorismate from D-erythrose 4-phosphate and phosphoenolpyruvate: step 6/7. In terms of biological role, catalyzes the transfer of the enolpyruvyl moiety of phosphoenolpyruvate (PEP) to the 5-hydroxyl of shikimate-3-phosphate (S3P) to produce enolpyruvyl shikimate-3-phosphate and inorganic phosphate. This is 3-phosphoshikimate 1-carboxyvinyltransferase from Streptococcus pneumoniae serotype 2 (strain D39 / NCTC 7466).